The primary structure comprises 102 residues: RNA-binding protein Hfq (102 aa).

Residues 9-68 (DPFLNALRRERVPVSIYLVNGIKLQGQIESFDQFVILLKNTVSQMVYKHAISTVVPSRPV) enclose the Sm domain. Residues 63–102 (VPSRPVSHHSNNAGGGTSSNYHHGSSPQNTSAQQDSEETE) are disordered. Positions 70–96 (HHSNNAGGGTSSNYHHGSSPQNTSAQQ) are enriched in polar residues.

The protein belongs to the Hfq family. In terms of assembly, homohexamer.

RNA chaperone that binds small regulatory RNA (sRNAs) and mRNAs to facilitate mRNA translational regulation in response to envelope stress, environmental stress and changes in metabolite concentrations. Also binds with high specificity to tRNAs. In Shigella dysenteriae serotype 1 (strain Sd197), this protein is RNA-binding protein Hfq.